A 425-amino-acid chain; its full sequence is Serine--tRNA ligase (425 aa).

230–232 (TAE) contributes to the L-serine binding site. 261-263 (RSE) is an ATP binding site. An L-serine-binding site is contributed by Glu-284. 348–351 (EISS) lines the ATP pocket. Ser-384 contributes to the L-serine binding site.

It belongs to the class-II aminoacyl-tRNA synthetase family. Type-1 seryl-tRNA synthetase subfamily. As to quaternary structure, homodimer. The tRNA molecule binds across the dimer.

It is found in the cytoplasm. It carries out the reaction tRNA(Ser) + L-serine + ATP = L-seryl-tRNA(Ser) + AMP + diphosphate + H(+). The catalysed reaction is tRNA(Sec) + L-serine + ATP = L-seryl-tRNA(Sec) + AMP + diphosphate + H(+). Its pathway is aminoacyl-tRNA biosynthesis; selenocysteinyl-tRNA(Sec) biosynthesis; L-seryl-tRNA(Sec) from L-serine and tRNA(Sec): step 1/1. Functionally, catalyzes the attachment of serine to tRNA(Ser). Is also able to aminoacylate tRNA(Sec) with serine, to form the misacylated tRNA L-seryl-tRNA(Sec), which will be further converted into selenocysteinyl-tRNA(Sec). The polypeptide is Serine--tRNA ligase (Streptococcus pyogenes serotype M2 (strain MGAS10270)).